Consider the following 2395-residue polypeptide: Centrosomal protein of 295 kDa (2395 aa).

The necessary for centriole targeting and microtubule association stretch occupies residues 1–540 (MKRKVMNGKL…KQADHLEVRP (540 aa)). Position 13 is a phosphoserine (serine 13). 5 coiled-coil regions span residues 53-84 (QRRNQQVSHLAEELRAEWEEAQSQKIQNLEKL), 114-148 (AERKTKAEARHKEALKAQKKQKEMLMKQKTRHIKA), 209-277 (DAHL…KRQT), 488-538 (ARHK…HLEV), and 567-592 (QQNRLHKQTVETARKRLLEYQTVLKE). 3 disordered regions span residues 602 to 643 (LIPD…PVQP), 660 to 681 (GHIPQRQGETARAKQSVESQER), and 735 to 764 (SDSQQISSEDSENISSKPTEPSSSLPLMPE). Serine 634 carries the phosphoserine modification. The segment covering 735–750 (SDSQQISSEDSENISS) has biased composition (low complexity). Positions 817–848 (GQLELQKKVLQERQEAQEKLLSCTQKELEEQT) form a coiled coil. Disordered regions lie at residues 864–893 (SLPSASAESGNIQTSSTKSDATVSSDSMDN), 966–986 (ADTQSRKIQKPPLPTNKKGLL), and 1212–1272 (VDPE…SKVT). A compositionally biased stretch (polar residues) spans 1219-1250 (FQFSPQTQENRSSQQTGFSSFTPSLRQPSCVS). Residues 1444–1488 (HDDLQALQQQLDVHREAIRSCQDIQEELLLQRLNKLEQRVSSKQI) are a coiled coil. Serine 1565 carries the post-translational modification Phosphoserine. A compositionally biased stretch (low complexity) spans 1677-1692 (PWGDSSQGSSSGDQPG). Disordered regions lie at residues 1677-1715 (PWGDSSQGSSSGDQPGAAAVHAEHSGESLGKELSGRASK), 1819-1845 (SEEEEEEEACTNLSPLMKPDDEVETQE), 1875-1899 (ESFSEQTEHQEQESSSKEEETGSLS), 1989-2013 (DLSSPGTSQEDRDFYQQNSESSSEK), and 2354-2395 (NKTP…SQCI). Residues 1697–1710 (HAEHSGESLGKELS) are compositionally biased toward basic and acidic residues. Residues 1880 to 1894 (QTEHQEQESSSKEEE) show a composition bias toward basic and acidic residues. The ALMS motif stretch occupies residues 2329–2395 (SLGEAFMKRK…TAKRNRSQCI (67 aa)). The segment covering 2376–2388 (HLKEAVSGDETAK) has biased composition (basic and acidic residues).

Interacts (via ALMS motif) with microtubules; this interaction is direct.

The protein localises to the cytoplasm. It is found in the cytoskeleton. It localises to the microtubule organizing center. Its subcellular location is the centrosome. The protein resides in the centriole. The protein localises to the spindle. Its function is as follows. Centriole-enriched microtubule-binding protein involved in centriole biogenesis. Essential for the generation of the distal portion of new-born centrioles in a CPAP- and CEP120-mediated elongation dependent manner during the cell cycle S/G2 phase after formation of the initiating cartwheel structure. Required for the recruitment of centriolar proteins, such as POC1B, POC5 and CEP135, into the distal portion of centrioles. Also required for centriole-to-centrosome conversion during mitotic progression, but is dispensable for cartwheel removal or centriole disengagement. Binds to and stabilizes centriolar microtubule. May be involved in ciliogenesis. The sequence is that of Centrosomal protein of 295 kDa from Rattus norvegicus (Rat).